We begin with the raw amino-acid sequence, 511 residues long: GMP synthase [glutamine-hydrolyzing] (511 aa).

One can recognise a Glutamine amidotransferase type-1 domain in the interval 3–193 (KILILDFGGQ…VYSICDVAGD (191 aa)). Cys80 (nucleophile) is an active-site residue. Active-site residues include His167 and Glu169. The GMPS ATP-PPase domain maps to 194–384 (WEPKNIKLEK…LDIPYQNVYR (191 aa)). 221–227 (SGGVDSL) lines the ATP pocket.

As to quaternary structure, homodimer.

The catalysed reaction is XMP + L-glutamine + ATP + H2O = GMP + L-glutamate + AMP + diphosphate + 2 H(+). It participates in purine metabolism; GMP biosynthesis; GMP from XMP (L-Gln route): step 1/1. Catalyzes the synthesis of GMP from XMP. In Malacoplasma penetrans (strain HF-2) (Mycoplasma penetrans), this protein is GMP synthase [glutamine-hydrolyzing].